The following is a 427-amino-acid chain: Gamma-glutamyl phosphate reductase (427 aa).

This sequence belongs to the gamma-glutamyl phosphate reductase family.

It localises to the cytoplasm. The catalysed reaction is L-glutamate 5-semialdehyde + phosphate + NADP(+) = L-glutamyl 5-phosphate + NADPH + H(+). It functions in the pathway amino-acid biosynthesis; L-proline biosynthesis; L-glutamate 5-semialdehyde from L-glutamate: step 2/2. Functionally, catalyzes the NADPH-dependent reduction of L-glutamate 5-phosphate into L-glutamate 5-semialdehyde and phosphate. The product spontaneously undergoes cyclization to form 1-pyrroline-5-carboxylate. The chain is Gamma-glutamyl phosphate reductase from Rhizobium meliloti (strain 1021) (Ensifer meliloti).